Reading from the N-terminus, the 380-residue chain is Cytochrome b (380 aa).

A run of 4 helical transmembrane segments spans residues 34 to 54, 78 to 99, 114 to 134, and 179 to 199; these read FGWLLGVCVIVQIATGLFLAM, WLLRNLHANGASFFFICIYFHI, WNIGVILLFLVMATAFVGYVL, and FFTFHFILPFIIAAMSMIHLL. Heme b-binding residues include H84 and H98. Heme b-binding residues include H183 and H197. Position 202 (H202) interacts with a ubiquinone. The next 4 membrane-spanning stretches (helical) occupy residues 227 to 247, 289 to 309, 321 to 341, and 348 to 368; these read FKDLLGFIILLGALAILSTFA, LGGVLALLLSIMVLFLMPIIH, AAKAFFWALIANTIILTWIGG, and FISIGQIASGLYFLIFVLIIP.

It belongs to the cytochrome b family. In terms of assembly, the cytochrome bc1 complex contains 3 respiratory subunits (MT-CYB, CYC1 and UQCRFS1), 2 core proteins (UQCRC1 and UQCRC2) and probably 6 low-molecular weight proteins. Heme b serves as cofactor.

The protein resides in the mitochondrion inner membrane. In terms of biological role, component of the ubiquinol-cytochrome c reductase complex (complex III or cytochrome b-c1 complex) that is part of the mitochondrial respiratory chain. The b-c1 complex mediates electron transfer from ubiquinol to cytochrome c. Contributes to the generation of a proton gradient across the mitochondrial membrane that is then used for ATP synthesis. In Rana dybowskii (Dybovsky's frog), this protein is Cytochrome b (mt-cyb).